The chain runs to 356 residues: Protein RecA (356 aa).

Position 67 to 74 (67 to 74 (GPESSGKT)) interacts with ATP.

This sequence belongs to the RecA family.

The protein localises to the cytoplasm. Can catalyze the hydrolysis of ATP in the presence of single-stranded DNA, the ATP-dependent uptake of single-stranded DNA by duplex DNA, and the ATP-dependent hybridization of homologous single-stranded DNAs. It interacts with LexA causing its activation and leading to its autocatalytic cleavage. The protein is Protein RecA of Yersinia pestis (strain Pestoides F).